We begin with the raw amino-acid sequence, 245 residues long: Probable metal transport system ATP-binding protein CPn_0542/CP_0210/CPj0542/CpB0563 (245 aa).

Residues 5-240 (ILAEGLAFRY…CCHPYKNQEF (236 aa)) form the ABC transporter domain. 39–46 (GPNGGGKS) contributes to the ATP binding site.

Belongs to the ABC transporter superfamily.

The protein localises to the cell inner membrane. Its function is as follows. Part of an ATP-driven transport system CPn0541/CPn0542/CPn0543 for a metal. Probably responsible for energy coupling to the transport system. The polypeptide is Probable metal transport system ATP-binding protein CPn_0542/CP_0210/CPj0542/CpB0563 (Chlamydia pneumoniae (Chlamydophila pneumoniae)).